A 197-amino-acid polypeptide reads, in one-letter code: ATP-dependent Clp protease proteolytic subunit 1 (197 aa).

Residue H126 is part of the active site.

Belongs to the peptidase S14 family. In terms of assembly, fourteen ClpP subunits assemble into 2 heptameric rings which stack back to back to give a disk-like structure with a central cavity, resembling the structure of eukaryotic proteasomes.

Its subcellular location is the cytoplasm. The catalysed reaction is Hydrolysis of proteins to small peptides in the presence of ATP and magnesium. alpha-casein is the usual test substrate. In the absence of ATP, only oligopeptides shorter than five residues are hydrolyzed (such as succinyl-Leu-Tyr-|-NHMec, and Leu-Tyr-Leu-|-Tyr-Trp, in which cleavage of the -Tyr-|-Leu- and -Tyr-|-Trp bonds also occurs).. In terms of biological role, cleaves peptides in various proteins in a process that requires ATP hydrolysis. Has a chymotrypsin-like activity. Plays a major role in the degradation of misfolded proteins. This is ATP-dependent Clp protease proteolytic subunit 1 from Nocardia farcinica (strain IFM 10152).